Reading from the N-terminus, the 647-residue chain is Leucine aminopeptidase 2 (647 aa).

Substrate-binding positions include 169-171 (QCQ) and 295-300 (PYGGME). Histidine 324 serves as a coordination point for Zn(2+). The Proton acceptor role is filled by glutamate 325. Histidine 328 and glutamate 347 together coordinate Zn(2+). The Proton donor role is filled by tyrosine 418.

The protein belongs to the peptidase M1 family. It depends on Zn(2+) as a cofactor.

It localises to the cytoplasm. The protein localises to the nucleus. It carries out the reaction an epoxide + H2O = an ethanediol. In terms of biological role, aminopeptidase that preferentially cleaves di- and tripeptides. Also has low epoxide hydrolase activity (in vitro). Can hydrolyze the epoxide leukotriene LTA(4) but it forms preferentially 5,6-dihydroxy-7,9,11,14-eicosatetraenoic acid rather than the cytokine leukotriene B(4) as the product compared to the homologous mammalian enzyme (in vitro). The protein is Leucine aminopeptidase 2 of Yarrowia lipolytica (strain CLIB 122 / E 150) (Yeast).